Here is a 910-residue protein sequence, read N- to C-terminus: Putative coatomer subunit beta'-3 (910 aa).

9 WD repeats span residues 13 to 52 (QRSE…MVKS), 55 to 94 (VTEL…KVKV), 97 to 136 (AHTD…MCTQ), 140 to 180 (GHSH…PNFT), 183 to 224 (GHSK…CVQT), 227 to 266 (GHAH…LENT), 269 to 309 (YGLE…ASMD), 351 to 393 (TCDL…GSAL), and 461 to 501 (RIDV…SHLD). Residues 865 to 884 (ENGVEESQEDAVEVDVEADG) are compositionally biased toward acidic residues. The interval 865-910 (ENGVEESQEDAVEVDVEADGSTDGTVLVNGNDTEEQWGTNNEESLA) is disordered. The span at 886 to 910 (TDGTVLVNGNDTEEQWGTNNEESLA) shows a compositional bias: polar residues.

Belongs to the WD repeat COPB2 family. Oligomeric complex that consists of at least the alpha, beta, beta', gamma, delta, epsilon and zeta subunits.

It localises to the cytoplasm. Its subcellular location is the golgi apparatus membrane. The protein localises to the cytoplasmic vesicle. The protein resides in the COPI-coated vesicle membrane. In terms of biological role, the coatomer is a cytosolic protein complex that binds to dilysine motifs and reversibly associates with Golgi non-clathrin-coated vesicles, which further mediate biosynthetic protein transport from the ER, via the Golgi up to the trans Golgi network. Coatomer complex is required for budding from Golgi membranes, and is essential for the retrograde Golgi-to-ER transport of dilysine-tagged proteins. This chain is Putative coatomer subunit beta'-3, found in Oryza sativa subsp. japonica (Rice).